The sequence spans 163 residues: Neurotrophin-3 (163 aa).

A signal peptide spans 1–3 (IQS). Positions 4–119 (TSMDQGILTE…VLNRTSRRKR (116 aa)) are excised as a propeptide. Residue Asn112 is glycosylated (N-linked (GlcNAc...) asparagine).

It belongs to the NGF-beta family.

It localises to the secreted. In terms of biological role, seems to promote the survival of visceral and proprioceptive sensory neurons. This chain is Neurotrophin-3 (NTF3), found in Eryx colubrinus colubrinus.